Consider the following 152-residue polypeptide: Probable prefoldin subunit 5 (152 aa).

Belongs to the prefoldin subunit alpha family. Heterohexamer of two PFD-alpha type and four PFD-beta type subunits.

Functionally, binds specifically to cytosolic chaperonin (c-CPN) and transfers target proteins to it. Binds to nascent polypeptide chain and promotes folding in an environment in which there are many competing pathways for nonnative proteins. In Caenorhabditis elegans, this protein is Probable prefoldin subunit 5 (pfd-5).